A 4690-amino-acid chain; its full sequence is Nonribosomal peptide synthetase sidN (4690 aa).

Positions A238–K656 are adenylation 1. Residues S779–L856 enclose the Carrier 1 domain. The residue at position 816 (S816) is an O-(pantetheine 4'-phosphoryl)serine. The tract at residues P925 to F1175 is condensation 1. The interval E1349–R1760 is adenylation 2. The Carrier 2 domain maps to P1889 to R1965. At S1926 the chain carries O-(pantetheine 4'-phosphoryl)serine. The condensation 2 stretch occupies residues P2001–V2285. The tract at residues T2464–R2869 is adenylation 3. The Carrier 3 domain maps to R3002–K3079. S3040 carries the post-translational modification O-(pantetheine 4'-phosphoryl)serine. The interval C3121–T3530 is condensation 3. Residues S3564–S3637 form the Carrier 4 domain. Position 3598 is an O-(pantetheine 4'-phosphoryl)serine (S3598). The segment at V3679–E4087 is condensation 4. The Carrier 5 domain maps to S4119–S4195. S4156 carries the O-(pantetheine 4'-phosphoryl)serine modification. The tract at residues W4262–N4589 is condensation 5.

Belongs to the NRP synthetase family.

Its pathway is siderophore biosynthesis. In terms of biological role, nonribosomal peptide synthetase required for the biosynthetis of epichloenin A, an extracellular siderophore that plays a crucial role in endophyte-grass symbioses. SidN assembles epichloenin A by activating and incorporating three trans-anhydromevalonylhydroxyornithine (trans-AMHO), 1 glutamine and 4 glycine moieties. Trans-AMHO is produced from L-ornithine via 2 steps involving a L-ornithine N(5)-monooxygenase and an AHMO-N(5)-transacylase that have still to be identified. The third adenylation domain (A3) of sidN incorporates the hydroxamate groups of the siderophore which forms an octahedral iron complex. The other component amino acids are assembled by sidN adenylation domains A1 and A2. The chain is Nonribosomal peptide synthetase sidN from Epichloe festucae (strain E2368).